Reading from the N-terminus, the 625-residue chain is Probable thymidylate synthase (625 aa).

Residues 224-323 (AVKNIDGQDD…PEPPVPFTSS (100 aa)) are disordered. Positions 243–257 (EEYDDDDDDDVDDNE) are enriched in acidic residues. Composition is skewed to polar residues over residues 258 to 269 (QSNSMIETSANA) and 293 to 312 (SQAP…NVTT). Residues Arg-350 and 477 to 478 (RR) contribute to the dUMP site. The active-site Nucleophile is Cys-497. DUMP-binding positions include 524-527 (RSAD), Asn-535, and 565-567 (HIY). Residue Asp-527 coordinates (6R)-5,10-methylene-5,6,7,8-tetrahydrofolate.

In the N-terminal section; belongs to the HFCD (homo-oligomeric flavin containing Cys decarboxylase) superfamily. This sequence in the C-terminal section; belongs to the thymidylate synthase family.

It is found in the cytoplasm. It catalyses the reaction dUMP + (6R)-5,10-methylene-5,6,7,8-tetrahydrofolate = 7,8-dihydrofolate + dTMP. It functions in the pathway pyrimidine metabolism; dTTP biosynthesis. In terms of biological role, required for both nuclear and mitochondrial DNA synthesis. This chain is Probable thymidylate synthase, found in Schizosaccharomyces pombe (strain 972 / ATCC 24843) (Fission yeast).